The following is a 440-amino-acid chain: Transposon Ty1-DR2 Gag polyprotein (440 aa).

2 stretches are compositionally biased toward polar residues: residues 1–31 (MESQ…TTQD) and 137–168 (VGTH…TNQH). Disordered regions lie at residues 1 to 75 (MESQ…PQAA), 137 to 174 (VGTH…PPPI), and 350 to 440 (QQES…PGTY). The segment at 299–401 (NNGIPINNKV…NSQSRTARAH (103 aa)) is RNA-binding. A compositionally biased stretch (basic and acidic residues) spans 363–372 (SPSDEKKDSR). A compositionally biased stretch (polar residues) spans 373 to 409 (TYTNTTKPKSITRNSQKPNNSQSRTARAHNVSTSNNF). The span at 429 to 440 (NKHDLHLRPGTY) shows a compositional bias: basic and acidic residues.

As to quaternary structure, homotrimer.

It is found in the cytoplasm. Functionally, capsid protein (CA) is the structural component of the virus-like particle (VLP), forming the shell that encapsulates the retrotransposons dimeric RNA genome. The particles are assembled from trimer-clustered units and there are holes in the capsid shells that allow for the diffusion of macromolecules. CA also has nucleocapsid-like chaperone activity, promoting primer tRNA(i)-Met annealing to the multipartite primer-binding site (PBS), dimerization of Ty1 RNA and initiation of reverse transcription. The sequence is that of Transposon Ty1-DR2 Gag polyprotein (TY1A-DR2) from Saccharomyces cerevisiae (strain ATCC 204508 / S288c) (Baker's yeast).